The following is a 341-amino-acid chain: Glucokinase (341 aa).

18–23 (GDIGGT) provides a ligand contact to ATP.

This sequence belongs to the bacterial glucokinase family.

The protein resides in the cytoplasm. The catalysed reaction is D-glucose + ATP = D-glucose 6-phosphate + ADP + H(+). The polypeptide is Glucokinase (Rhizobium leguminosarum bv. trifolii (strain WSM2304)).